Consider the following 243-residue polypeptide: Venom nerve growth factor 5 (243 aa).

The signal sequence occupies residues 1 to 18 (MSMLCYTLIIAFLIGIWA). The propeptide occupies 19–125 (APKSEDNVPL…TLNRNIRTKR (107 aa)). Over residues 47–66 (GLKTSRNTDQRHPAPKKAED) the composition is skewed to basic and acidic residues. Positions 47–67 (GLKTSRNTDQRHPAPKKAEDQ) are disordered. Disulfide bonds link cysteine 139–cysteine 204, cysteine 182–cysteine 232, and cysteine 192–cysteine 234. Asparagine 148 is a glycosylation site (N-linked (GlcNAc...) asparagine).

Belongs to the NGF-beta family. As to quaternary structure, homodimer; non-covalently linked. Expressed by the venom gland.

The protein localises to the secreted. Nerve growth factor is important for the development and maintenance of the sympathetic and sensory nervous systems. It stimulates division and differentiation of sympathetic and embryonic sensory neurons as well as basal forebrain cholinergic neurons in the brain. Its relevance in the snake venom is not clear. However, it has been shown to inhibit metalloproteinase-dependent proteolysis of platelet glycoprotein Ib alpha, suggesting a metalloproteinase inhibition to prevent metalloprotease autodigestion and/or protection against prey proteases. Binds a lipid between the two protein chains in the homodimer. The lipid-bound form promotes histamine relase from mouse mast cells, contrary to the lipid-free form. The protein is Venom nerve growth factor 5 of Tropidechis carinatus (Australian rough-scaled snake).